A 483-amino-acid polypeptide reads, in one-letter code: Isocitrate dehydrogenase [NADP] (483 aa).

Thr-74 serves as a coordination point for NADP(+). Positions 83, 85, 89, 99, and 121 each coordinate D-threo-isocitrate. Residue Asp-232 coordinates Mg(2+). Residues 264–270 and Asn-277 each bind NADP(+); that span reads HGSAPDI.

It belongs to the isocitrate and isopropylmalate dehydrogenases family. Homodimer. It depends on Mg(2+) as a cofactor. Requires Mn(2+) as cofactor.

It catalyses the reaction D-threo-isocitrate + NADP(+) = 2-oxoglutarate + CO2 + NADPH. Catalyzes the oxidative decarboxylation of isocitrate to 2-oxoglutarate and carbon dioxide with the concomitant reduction of NADP(+). This chain is Isocitrate dehydrogenase [NADP] (icd), found in Rickettsia bellii (strain RML369-C).